A 130-amino-acid chain; its full sequence is Small ribosomal subunit protein uS11 (130 aa).

This sequence belongs to the universal ribosomal protein uS11 family. Part of the 30S ribosomal subunit. Interacts with proteins S7 and S18. Binds to IF-3.

Its function is as follows. Located on the platform of the 30S subunit, it bridges several disparate RNA helices of the 16S rRNA. Forms part of the Shine-Dalgarno cleft in the 70S ribosome. The protein is Small ribosomal subunit protein uS11 of Caldanaerobacter subterraneus subsp. tengcongensis (strain DSM 15242 / JCM 11007 / NBRC 100824 / MB4) (Thermoanaerobacter tengcongensis).